The following is a 299-amino-acid chain: Glutamyl-Q tRNA(Asp) synthetase (299 aa).

L-glutamate-binding positions include 9 to 13 and glutamate 45; that span reads RFAPS. The 'HIGH' region motif lies at 12–22; the sequence is PSPTGPLHFGS. Cysteine 101, cysteine 103, and cysteine 118 together coordinate Zn(2+). L-glutamate is bound by residues tyrosine 170 and arginine 188. Residues 226 to 230 carry the 'KMSKS' region motif; it reads KLSKS. ATP is bound at residue lysine 229.

This sequence belongs to the class-I aminoacyl-tRNA synthetase family. GluQ subfamily. Zn(2+) is required as a cofactor.

Catalyzes the tRNA-independent activation of glutamate in presence of ATP and the subsequent transfer of glutamate onto a tRNA(Asp). Glutamate is transferred on the 2-amino-5-(4,5-dihydroxy-2-cyclopenten-1-yl) moiety of the queuosine in the wobble position of the QUC anticodon. The sequence is that of Glutamyl-Q tRNA(Asp) synthetase from Xanthomonas axonopodis pv. citri (strain 306).